Consider the following 510-residue polypeptide: Archaeal glutamate synthase [NADPH] (510 aa).

2 4Fe-4S ferredoxin-type domains span residues 10 to 37 (YKVE…YRRE) and 38 to 68 (GDRI…IKEN). [4Fe-4S] cluster-binding residues include Cys19, Cys22, Cys25, Cys29, Cys48, Cys51, Cys54, and Cys58.

This sequence belongs to the glutamate synthase family. FMN is required as a cofactor.

It carries out the reaction 2 L-glutamate + NADP(+) = L-glutamine + 2-oxoglutarate + NADPH + H(+). The protein is Archaeal glutamate synthase [NADPH] of Methanocaldococcus jannaschii (strain ATCC 43067 / DSM 2661 / JAL-1 / JCM 10045 / NBRC 100440) (Methanococcus jannaschii).